A 344-amino-acid chain; its full sequence is Dihydroorotase (344 aa).

Residues His13 and His15 each contribute to the Zn(2+) site. Residues 15–17 (HLR) and Asn41 each bind substrate. Zn(2+)-binding residues include Lys99, His136, and His174. Lys99 bears the N6-carboxylysine mark. A substrate-binding site is contributed by His136. Leu219 contributes to the substrate binding site. A Zn(2+)-binding site is contributed by Asp247. The active site involves Asp247. The substrate site is built by His251 and Ala263.

This sequence belongs to the metallo-dependent hydrolases superfamily. DHOase family. Class II DHOase subfamily. As to quaternary structure, homodimer. Requires Zn(2+) as cofactor.

The enzyme catalyses (S)-dihydroorotate + H2O = N-carbamoyl-L-aspartate + H(+). The protein operates within pyrimidine metabolism; UMP biosynthesis via de novo pathway; (S)-dihydroorotate from bicarbonate: step 3/3. Functionally, catalyzes the reversible cyclization of carbamoyl aspartate to dihydroorotate. The chain is Dihydroorotase from Acinetobacter baumannii (strain AB307-0294).